Consider the following 414-residue polypeptide: Relaxin-3 receptor 2 (414 aa).

The Extracellular portion of the chain corresponds to 1 to 43 (MATSNSSASLPTLFWVNGSGDSVLSTDGAAMPVQFLVLRIMVA). Residues asparagine 5 and asparagine 17 are each glycosylated (N-linked (GlcNAc...) asparagine). The helical transmembrane segment at 44-64 (LAYGLVGIIGLLGNLAVLWVL) threads the bilayer. Over 65–77 (GNCGQRVPGLSSD) the chain is Cytoplasmic. A helical membrane pass occupies residues 78–98 (TFVFSLALADLGLALTLPFWA). At 99–116 (TESAMDFHWPFGSALCKV) the chain is on the extracellular side. A disulfide bridge connects residues cysteine 114 and cysteine 191. A helical transmembrane segment spans residues 117 to 137 (VLTTTVLSIYASTFLITALSI). Residues 138–155 (ARYWVVAMAVGPGSHLSV) are Cytoplasmic-facing. The helical transmembrane segment at 156–176 (FWARVVTLAVWVAAALVTVPT) threads the bilayer. The Extracellular segment spans residues 177–209 (AIFGAEVELWGVCLCLLRFPSRYWLGAYQLQRV). A helical transmembrane segment spans residues 210–230 (VLAFIVPLGVITTSYLLLLAF). At 231–255 (LERQQRCRPRQWQDSRVVARSVRVL) the chain is on the cytoplasmic side. A helical membrane pass occupies residues 256–276 (VASFALCWVPNHVVTLWEILV). At 277-293 (RFDLVPWDSTFYTFHTY) the chain is on the extracellular side. A helical transmembrane segment spans residues 294–316 (ILPITTCLAHSNSCLNPVIYCLL). Over 317-414 (RREPQQVLVS…SQAAVSPGEV (98 aa)) the chain is Cytoplasmic.

It belongs to the G-protein coupled receptor 1 family. As to expression, detected only in bone marrow.

It is found in the cell membrane. In terms of biological role, high affinity receptor for INSL5. Also acts as a receptor for RLN3/relaxin-3, as well as bradykinin and kallidin. Binding of the ligand inhibit cAMP accumulation. This is Relaxin-3 receptor 2 (Rxfp4) from Mus musculus (Mouse).